We begin with the raw amino-acid sequence, 306 residues long: Phenylcoumaran benzylic ether reductase IRL1 (306 aa).

Residues 10 to 16 (GATGYIG), R35, and K44 contribute to the NADP(+) site. K132 (proton acceptor) is an active-site residue. R136 is a binding site for NADP(+).

Belongs to the NmrA-type oxidoreductase family. Isoflavone reductase subfamily. In terms of tissue distribution, highly expressed in sclerotesta. Expressed in roots, and two-to-four year stems.

It carries out the reaction (-)-dehydrodiconiferyl alcohol + NADPH + H(+) = (S)-isodihydrodehydrodiconiferyl alcohol + NADP(+). The catalysed reaction is (+)-dehydrodiconiferyl alcohol + NADPH + H(+) = (R)-isodihydrodehydrodiconiferyl alcohol + NADP(+). The enzyme catalyses (2R,3S)-dihydrodehydrodiconiferyl alcohol + NADPH + H(+) = (S)-tetrahydrodehydrodiconiferyl alcohol + NADP(+). It catalyses the reaction (2S,3R)-dihydrodehydrodiconiferyl alcohol + NADPH + H(+) = (R)-tetrahydrodehydrodiconiferyl alcohol + NADP(+). Functionally, oxidoreductase involved in lignan biosynthesis. Catalyzes the NADPH-dependent reduction of phenylcoumaran benzylic ethers. Converts dehydrodiconiferyl alcohol (DDC) to isodihydrodehydrodiconiferyl alcohol (IDDDC), and dihydrodehydrodiconiferyl alcohol (DDDC) to tetrahydrodehydrodiconiferyl alcohol (TDDC). May regulate changes in lignin content and accumulation of flavonoids. The sequence is that of Phenylcoumaran benzylic ether reductase IRL1 from Ginkgo biloba (Ginkgo).